Reading from the N-terminus, the 550-residue chain is Spermatogenesis-associated protein 2 (550 aa).

Residues 83-156 (TVGTAFATLE…YNVRDHPGGA (74 aa)) enclose the PUB domain. Positions 320–337 (YHLSSLDEVDLYTERGLG) match the PIM motif motif. A disordered region spans residues 457–480 (SKPVGSGPSPVGSLVSSGSSSSGG).

It belongs to the SPATA2 family.

It is found in the cytoplasm. It localises to the nucleus. Bridging factor that mediates the recruitment of cyld to the LUBAC complex, thereby regulating TNF-alpha-induced necroptosis. Required to activate the 'Met-1'- (linear) and 'Lys-63'-linked deubiquitinase activities of cyld. This chain is Spermatogenesis-associated protein 2, found in Danio rerio (Zebrafish).